The chain runs to 697 residues: SPX domain-containing membrane protein At1g63010 (697 aa).

In terms of domain architecture, SPX spans 2-145 (VAFGKYLQRK…GYRFADYYVK (144 aa)). 6 consecutive transmembrane segments (helical) span residues 247–267 (FNSL…TYII), 278–298 (LGAA…AQVF), 315–335 (LVFS…AYDA), 337–356 (SIAL…ARAV), 375–395 (AGFV…AGLL), and 411–431 (LPGW…CISF). Positions 439–459 (EDGEKNNRNETTSDRVESSRV) are disordered. Helical transmembrane passes span 513–533 (LLIY…SSVI), 544–564 (SVAI…ILVG), 576–596 (ILLT…NLFV), 604–624 (VISG…NLSL), and 670–690 (LLNA…VATC).

The protein belongs to the major facilitator superfamily.

It is found in the membrane. In Arabidopsis thaliana (Mouse-ear cress), this protein is SPX domain-containing membrane protein At1g63010.